The following is a 300-amino-acid chain: Tumor necrosis factor receptor superfamily member 6B (300 aa).

A signal peptide spans 1-29 (MRALEGPGLSLLCLVLALPALLPVPAVRG). 4 TNFR-Cys repeats span residues 31–70 (AETP…PTTC), 72–113 (PCPP…NRAC), 115–150 (CRTG…NTQC), and 152–193 (PCPP…DTLC). 8 disulfide bridges follow: Cys-49–Cys-62, Cys-52–Cys-70, Cys-73–Cys-88, Cys-91–Cys-105, Cys-95–Cys-113, Cys-115–Cys-126, Cys-132–Cys-150, and Cys-153–Cys-168. Residue Asn-173 is glycosylated (N-linked (GlcNAc...) asparagine). Cys-174 and Cys-193 form a disulfide bridge.

Detected in fetal lung, brain and liver. Detected in adult stomach, spinal cord, lymph node, trachea, spleen, colon and lung. Highly expressed in several primary tumors from colon, stomach, rectum, esophagus and in SW480 colon carcinoma cells.

It is found in the secreted. In terms of biological role, decoy receptor that can neutralize the cytotoxic ligands TNFS14/LIGHT, TNFSF15 and TNFSF6/FASL. Protects against apoptosis. This Homo sapiens (Human) protein is Tumor necrosis factor receptor superfamily member 6B (TNFRSF6B).